The primary structure comprises 232 residues: Phosphatidylserine decarboxylase proenzyme (232 aa).

The Schiff-base intermediate with substrate; via pyruvic acid role is filled by Ser-190. Ser-190 is modified (pyruvic acid (Ser); by autocatalysis).

This sequence belongs to the phosphatidylserine decarboxylase family. PSD-A subfamily. As to quaternary structure, heterodimer of a large membrane-associated beta subunit and a small pyruvoyl-containing alpha subunit. It depends on pyruvate as a cofactor. In terms of processing, is synthesized initially as an inactive proenzyme. Formation of the active enzyme involves a self-maturation process in which the active site pyruvoyl group is generated from an internal serine residue via an autocatalytic post-translational modification. Two non-identical subunits are generated from the proenzyme in this reaction, and the pyruvate is formed at the N-terminus of the alpha chain, which is derived from the carboxyl end of the proenzyme. The post-translation cleavage follows an unusual pathway, termed non-hydrolytic serinolysis, in which the side chain hydroxyl group of the serine supplies its oxygen atom to form the C-terminus of the beta chain, while the remainder of the serine residue undergoes an oxidative deamination to produce ammonia and the pyruvoyl prosthetic group on the alpha chain.

The protein resides in the cell membrane. The catalysed reaction is a 1,2-diacyl-sn-glycero-3-phospho-L-serine + H(+) = a 1,2-diacyl-sn-glycero-3-phosphoethanolamine + CO2. It participates in phospholipid metabolism; phosphatidylethanolamine biosynthesis; phosphatidylethanolamine from CDP-diacylglycerol: step 2/2. Functionally, catalyzes the formation of phosphatidylethanolamine (PtdEtn) from phosphatidylserine (PtdSer). This chain is Phosphatidylserine decarboxylase proenzyme, found in Beijerinckia indica subsp. indica (strain ATCC 9039 / DSM 1715 / NCIMB 8712).